The chain runs to 121 residues: Large ribosomal subunit protein bL19 (121 aa).

It belongs to the bacterial ribosomal protein bL19 family.

In terms of biological role, this protein is located at the 30S-50S ribosomal subunit interface and may play a role in the structure and function of the aminoacyl-tRNA binding site. This Chlamydia trachomatis serovar L2 (strain ATCC VR-902B / DSM 19102 / 434/Bu) protein is Large ribosomal subunit protein bL19.